The sequence spans 554 residues: ATP synthase subunit alpha (554 aa).

172–179 (GDRKTGKT) is a binding site for ATP. The disordered stretch occupies residues 528–554 (LDEEELEKESVKVKKPAPEKKAKKEQK). Over residues 535 to 554 (KESVKVKKPAPEKKAKKEQK) the composition is skewed to basic and acidic residues.

The protein belongs to the ATPase alpha/beta chains family. F-type ATPases have 2 components, CF(1) - the catalytic core - and CF(0) - the membrane proton channel. CF(1) has five subunits: alpha(3), beta(3), gamma(1), delta(1), epsilon(1). CF(0) has three main subunits: a(1), b(2) and c(9-12). The alpha and beta chains form an alternating ring which encloses part of the gamma chain. CF(1) is attached to CF(0) by a central stalk formed by the gamma and epsilon chains, while a peripheral stalk is formed by the delta and b chains.

The protein resides in the cell membrane. The enzyme catalyses ATP + H2O + 4 H(+)(in) = ADP + phosphate + 5 H(+)(out). In terms of biological role, produces ATP from ADP in the presence of a proton gradient across the membrane. The alpha chain is a regulatory subunit. In Mycolicibacterium paratuberculosis (strain ATCC BAA-968 / K-10) (Mycobacterium paratuberculosis), this protein is ATP synthase subunit alpha.